The primary structure comprises 190 residues: Endoribonuclease YbeY (190 aa).

Positions 147, 151, and 157 each coordinate Zn(2+).

Belongs to the endoribonuclease YbeY family. Zn(2+) is required as a cofactor.

It localises to the cytoplasm. In terms of biological role, single strand-specific metallo-endoribonuclease involved in late-stage 70S ribosome quality control and in maturation of the 3' terminus of the 16S rRNA. This chain is Endoribonuclease YbeY, found in Nitrobacter winogradskyi (strain ATCC 25391 / DSM 10237 / CIP 104748 / NCIMB 11846 / Nb-255).